The sequence spans 132 residues: MAITHSVGDMLTKLRNASRVKHGSVDLKMSNMNKSILNILKKEGYIKDFNFLEKEGITFIRVLLKYDNKRNPVINKIDAISTPGRKIYSSYKNMPRIKNGYGILIISSSQGVITGKEAKDKKIGGELICSVW.

The protein belongs to the universal ribosomal protein uS8 family. As to quaternary structure, part of the 30S ribosomal subunit. Contacts proteins S5 and S12.

Functionally, one of the primary rRNA binding proteins, it binds directly to 16S rRNA central domain where it helps coordinate assembly of the platform of the 30S subunit. This chain is Small ribosomal subunit protein uS8, found in Borreliella afzelii (strain PKo) (Borrelia afzelii).